A 117-amino-acid polypeptide reads, in one-letter code: Nitrogen regulatory protein GlnK1 (117 aa).

ADP is bound by residues T32, 40 to 42, and 92 to 95; these read GAQ and GSGK. Residues T32, 40 to 42, and 92 to 95 each bind ATP; these read GAQ and GSGK.

It belongs to the P(II) protein family. Homotrimer. Interacts and forms stable complexes with the glutamine synthetase GlnA1.

It is found in the cytoplasm. Its activity is regulated as follows. Inhibitory effects on GlnA1 are abolished in the presence of the effector 2-oxoglutarate. In terms of biological role, involved in the regulation of nitrogen metabolism. Regulates the activity of its targets by protein-protein interaction in response to the nitrogen status of the cell. Allows finetuning control of the glutamine synthetase GlnA1 under changing nitrogen availabilities via direct protein interaction. The chain is Nitrogen regulatory protein GlnK1 from Methanosarcina mazei (strain ATCC BAA-159 / DSM 3647 / Goe1 / Go1 / JCM 11833 / OCM 88) (Methanosarcina frisia).